The primary structure comprises 275 residues: Phosphate import ATP-binding protein PstB 2 (275 aa).

The ABC transporter domain occupies 29–270; that stretch reads LEVKNLNIYY…PSEKKTEDYI (242 aa). 61 to 68 contributes to the ATP binding site; the sequence is GPSGCGKS.

Belongs to the ABC transporter superfamily. Phosphate importer (TC 3.A.1.7) family. As to quaternary structure, the complex is composed of two ATP-binding proteins (PstB), two transmembrane proteins (PstC and PstA) and a solute-binding protein (PstS).

Its subcellular location is the cell membrane. The catalysed reaction is phosphate(out) + ATP + H2O = ADP + 2 phosphate(in) + H(+). Its function is as follows. Part of the ABC transporter complex PstSACB involved in phosphate import. Responsible for energy coupling to the transport system. The protein is Phosphate import ATP-binding protein PstB 2 of Bacillus licheniformis (strain ATCC 14580 / DSM 13 / JCM 2505 / CCUG 7422 / NBRC 12200 / NCIMB 9375 / NCTC 10341 / NRRL NRS-1264 / Gibson 46).